A 443-amino-acid chain; its full sequence is Threonine/serine transporter TdcC (443 aa).

A run of 11 helical transmembrane segments spans residues 22–42 (TTWTLGLFGTAIGAGVLFFPI), 44–64 (AGFGGLIPILLMLVLAYPIAF), 97–117 (GVVITFLYFFAICPLLWIYGV), 140–160 (FVALFLLLLMAFVIWFGKDLM), 163–183 (VMSYLVWPFIASLVLISLSLI), 207–227 (ILITVWLGISIMVFSFNFSPI), 261–281 (MLMVAVVMFFAFSCLFTLSPA), 311–331 (FAITLEYAASIIALVAIFKSF), 366–386 (ISMIFIMGSTWVVAYANPNIL), 389–409 (IEAMGAPIIASLLCLLPMYAI), and 423–443 (DNVFVTVIGLLTILNIVYKLF).

This sequence belongs to the amino acid/polyamine transporter 2 family. SdaC/TdcC subfamily.

The protein resides in the cell inner membrane. The enzyme catalyses L-threonine(in) + H(+)(in) = L-threonine(out) + H(+)(out). The catalysed reaction is L-serine(in) + H(+)(in) = L-serine(out) + H(+)(out). Involved in the import of threonine and serine into the cell, with the concomitant import of a proton (symport system). This chain is Threonine/serine transporter TdcC, found in Shigella sonnei (strain Ss046).